The sequence spans 795 residues: MMVESASETIRSAPSGQNGVGSLSAQADGGGGAGTAGTAPAAGRDASGREAASGGADSNGEMSPAELLHFQQQQALQVARQFLLQQASSLNSPGNNDSKQSASAVQVPVSVAMMSQQMLTPQQMQQILSPPQLQALLQQQQALMLQQLQEYYKKQQEQLHLQLLTQQQAGKQQPKEALGNKQLAFQQQLLQMQQLQQQHLLNLQRQGLVSLQPSQASGPLQALPQAVCPTDLPQLWKGEGAPGQPAEDSGRQEGLDLASTAVTATSFASPPKVSPPLSHHPLPNGQPTVLTSRRDSSSHEETPSSHPLYGHGECKWPGCETLCEDLGQFIKHLNTEHALDDRSTAQCRVQMQVVQQLEIQLAKESERLQAMMAHLHMRPSEPKPFSQPVTVSADPFPDGLVHPPTSAAAPVTPLRPPGLGSASLHSGGPARRRSNDKFCSPISSELAQNHEFYKNADVRPPFTYASLIRQAILETPDRQLTLNEIYNWFTRMFAYFRRNTATWKNAVRHNLSLHKCFVRVENVKGAVWTVDEREYQKRRPPKMTGSPTLVKNMISGLSYGALNASYQAALAESSFPLLSNPGMLNPGSASSLLPLSQEDLGVPGEPLPSNGSSSPPRLSPPQYSHQIQVKEEPAEAEEDRRPGPPLGAPNPSTVGPPEDRDLEEDLGGEDMPSQPCPLIPGWKPSLLHLSYCVKPKFTVSVGSKTPSSPLPPPPRVQGSYSLPPCSYLAYGDMRGQNPAPSPGLLSGVGGGLFRCLHRTKSPSLPGVWILAAELETMRFHRPPMGDPQPKTADWV.

A compositionally biased stretch (polar residues) spans 1–25 (MMVESASETIRSAPSGQNGVGSLSA). A disordered region spans residues 1–62 (MMVESASETI…SGGADSNGEM (62 aa)). Residues 36-45 (AGTAPAAGRD) show a composition bias toward low complexity. Phosphoserine is present on residues Ser58 and Ser92. A Glycyl lysine isopeptide (Lys-Gly) (interchain with G-Cter in SUMO2) cross-link involves residue Lys181. 2 disordered regions span residues 233–252 (PQLW…SGRQ) and 265–310 (TSFA…PLYG). Basic and acidic residues predominate over residues 292–303 (SRRDSSSHEETP). The C2H2-type zinc-finger motif lies at 312–337 (GECKWPGCETLCEDLGQFIKHLNTEH). Residues 354–375 (VQQLEIQLAKESERLQAMMAHL) are leucine-zipper. The segment at 379–437 (PSEPKPFSQPVTVSADPFPDGLVHPPTSAAAPVTPLRPPGLGSASLHSGGPARRRSNDK) is disordered. Residue Lys383 forms a Glycyl lysine isopeptide (Lys-Gly) (interchain with G-Cter in SUMO2) linkage. Positions 459 to 549 (RPPFTYASLI…PPKMTGSPTL (91 aa)) form a DNA-binding region, fork-head. Position 546 is a phosphoserine (Ser546). The disordered stretch occupies residues 589-671 (ASSLLPLSQE…LEEDLGGEDM (83 aa)). Over residues 609–627 (SNGSSSPPRLSPPQYSHQI) the composition is skewed to polar residues. The span at 628 to 642 (QVKEEPAEAEEDRRP) shows a compositional bias: basic and acidic residues.

As to quaternary structure, forms homodimers and heterodimers with FOXP1 and FOXP2. Dimerization is required for DNA-binding. As to expression, expressed in the adult heart, brain, spleen lung, liver, kidney and testes.

The protein localises to the nucleus. Its function is as follows. Transcriptional repressor that represses lung-specific expression. This is Forkhead box protein P4 from Mus musculus (Mouse).